We begin with the raw amino-acid sequence, 323 residues long: Fructose-1,6-bisphosphatase class 1 (323 aa).

Mg(2+)-binding residues include Glu-84, Asp-103, Leu-105, and Asp-106. Substrate-binding positions include Asp-106–Ser-109, Asn-198, and Lys-264. Glu-270 is a Mg(2+) binding site.

Belongs to the FBPase class 1 family. As to quaternary structure, homotetramer. Mg(2+) serves as cofactor.

It is found in the cytoplasm. The catalysed reaction is beta-D-fructose 1,6-bisphosphate + H2O = beta-D-fructose 6-phosphate + phosphate. Its pathway is carbohydrate biosynthesis; gluconeogenesis. This chain is Fructose-1,6-bisphosphatase class 1, found in Hydrogenovibrio crunogenus (strain DSM 25203 / XCL-2) (Thiomicrospira crunogena).